Here is a 390-residue protein sequence, read N- to C-terminus: Transforming growth factor beta-1 proprotein (390 aa).

The first 29 residues, 1-29 (MPPSGLRLLPLLLPLLWLLMLTPGRPVAG), serve as a signal peptide directing secretion. The segment at 30–74 (LSTCKTIDMELVKRKRIEAIRGQILSKLRLASPPSQGDVPPGPLP) is straightjacket domain. Residues 75 to 271 (EAILALYNST…ATPLERAQHL (197 aa)) form an arm domain region. 3 N-linked (GlcNAc...) asparagine glycosylation sites follow: Asn-82, Asn-136, and Asn-176. The tract at residues 226–252 (DSKDNTLQVDINGFSSGRRGDLATIHG) is bowtie tail. The Cell attachment site signature appears at 244-246 (RGD). 4 disulfides stabilise this stretch: Cys-285/Cys-294, Cys-293/Cys-356, Cys-322/Cys-387, and Cys-326/Cys-389.

It belongs to the TGF-beta family. Homodimer; disulfide-linked. Interacts with the serine proteases, HTRA1 and HTRA3: the interaction with either inhibits TGFB1-mediated signaling and the HTRA protease activity is required for this inhibition. May interact with THSD4; this interaction may lead to sequestration by FBN1 microfibril assembly and attenuation of TGFB signaling. Interacts with CD109, DPT and ASPN. Interacts with EFEMP2. Interacts with TSKU; the interaction contributes to regulation of the hair cycle. Interacts with TGFBR3. In terms of assembly, homodimer; disulfide-linked. Interacts with transforming growth factor beta-1 (TGF-beta-1) chain; interaction is non-covalent and maintains TGF-beta-1 in a latent state; each latency-associated peptide (LAP) monomer interacts with TGF-beta-1 in the other monomer. Interacts with LTBP1; leading to regulation of TGF-beta-1 activation. Interacts with LRRC32/GARP; leading to regulation of TGF-beta-1 activation on the surface of activated regulatory T-cells (Tregs). Interacts with LRRC33/NRROS; leading to regulation of TGF-beta-1 activation in macrophages and microglia. Interacts (via cell attachment site) with integrins ITGAV and ITGB6 (ITGAV:ITGB6), leading to release of the active TGF-beta-1. Interacts with NREP; the interaction results in a decrease in TGFB1 autoinduction. Interacts with HSP90AB1; inhibits latent TGFB1 activation. As to quaternary structure, homodimer; disulfide-linked. Interacts with TGF-beta receptors (TGFBR1 and TGFBR2), leading to signal transduction. Interacts with EFEMP2. In terms of processing, transforming growth factor beta-1 proprotein: The precursor proprotein is cleaved in the Golgi apparatus by FURIN to form Transforming growth factor beta-1 (TGF-beta-1) and Latency-associated peptide (LAP) chains, which remain non-covalently linked, rendering TGF-beta-1 inactive. N-glycosylated. Deglycosylation leads to activation of Transforming growth factor beta-1 (TGF-beta-1); mechanisms triggering deglycosylation-driven activation of TGF-beta-1 are however unclear.

The protein localises to the secreted. It localises to the extracellular space. It is found in the extracellular matrix. Functionally, transforming growth factor beta-1 proprotein: Precursor of the Latency-associated peptide (LAP) and Transforming growth factor beta-1 (TGF-beta-1) chains, which constitute the regulatory and active subunit of TGF-beta-1, respectively. In terms of biological role, required to maintain the Transforming growth factor beta-1 (TGF-beta-1) chain in a latent state during storage in extracellular matrix. Associates non-covalently with TGF-beta-1 and regulates its activation via interaction with 'milieu molecules', such as LTBP1, LRRC32/GARP and LRRC33/NRROS, that control activation of TGF-beta-1. Interaction with LRRC33/NRROS regulates activation of TGF-beta-1 in macrophages and microglia. Interaction with LRRC32/GARP controls activation of TGF-beta-1 on the surface of activated regulatory T-cells (Tregs). Interaction with integrins (ITGAV:ITGB6 or ITGAV:ITGB8) results in distortion of the Latency-associated peptide chain and subsequent release of the active TGF-beta-1. Its function is as follows. Multifunctional protein that regulates the growth and differentiation of various cell types and is involved in various processes, such as normal development, immune function, microglia function and responses to neurodegeneration. Activation into mature form follows different steps: following cleavage of the proprotein in the Golgi apparatus, Latency-associated peptide (LAP) and Transforming growth factor beta-1 (TGF-beta-1) chains remain non-covalently linked rendering TGF-beta-1 inactive during storage in extracellular matrix. At the same time, LAP chain interacts with 'milieu molecules', such as LTBP1, LRRC32/GARP and LRRC33/NRROS that control activation of TGF-beta-1 and maintain it in a latent state during storage in extracellular milieus. TGF-beta-1 is released from LAP by integrins (ITGAV:ITGB6 or ITGAV:ITGB8): integrin-binding to LAP stabilizes an alternative conformation of the LAP bowtie tail and results in distortion of the LAP chain and subsequent release of the active TGF-beta-1. Once activated following release of LAP, TGF-beta-1 acts by binding to TGF-beta receptors (TGFBR1 and TGFBR2), which transduce signal. While expressed by many cells types, TGF-beta-1 only has a very localized range of action within cell environment thanks to fine regulation of its activation by Latency-associated peptide chain (LAP) and 'milieu molecules'. Plays an important role in bone remodeling: acts as a potent stimulator of osteoblastic bone formation, causing chemotaxis, proliferation and differentiation in committed osteoblasts. Can promote either T-helper 17 cells (Th17) or regulatory T-cells (Treg) lineage differentiation in a concentration-dependent manner. At high concentrations, leads to FOXP3-mediated suppression of RORC and down-regulation of IL-17 expression, favoring Treg cell development. At low concentrations in concert with IL-6 and IL-21, leads to expression of the IL-17 and IL-23 receptors, favoring differentiation to Th17 cells. Stimulates sustained production of collagen through the activation of CREB3L1 by regulated intramembrane proteolysis (RIP). Mediates SMAD2/3 activation by inducing its phosphorylation and subsequent translocation to the nucleus. Positively regulates odontoblastic differentiation in dental papilla cells, via promotion of IPO7-mediated translocation of phosphorylated SMAD2 to the nucleus and subsequent transcription of target genes. Can induce epithelial-to-mesenchymal transition (EMT) and cell migration in various cell types. The polypeptide is Transforming growth factor beta-1 proprotein (TGFB1) (Bos taurus (Bovine)).